The chain runs to 480 residues: Aspartyl/glutamyl-tRNA(Asn/Gln) amidotransferase subunit B (480 aa).

This sequence belongs to the GatB/GatE family. GatB subfamily. In terms of assembly, heterotrimer of A, B and C subunits.

The catalysed reaction is L-glutamyl-tRNA(Gln) + L-glutamine + ATP + H2O = L-glutaminyl-tRNA(Gln) + L-glutamate + ADP + phosphate + H(+). It carries out the reaction L-aspartyl-tRNA(Asn) + L-glutamine + ATP + H2O = L-asparaginyl-tRNA(Asn) + L-glutamate + ADP + phosphate + 2 H(+). Its function is as follows. Allows the formation of correctly charged Asn-tRNA(Asn) or Gln-tRNA(Gln) through the transamidation of misacylated Asp-tRNA(Asn) or Glu-tRNA(Gln) in organisms which lack either or both of asparaginyl-tRNA or glutaminyl-tRNA synthetases. The reaction takes place in the presence of glutamine and ATP through an activated phospho-Asp-tRNA(Asn) or phospho-Glu-tRNA(Gln). The protein is Aspartyl/glutamyl-tRNA(Asn/Gln) amidotransferase subunit B of Streptococcus pneumoniae serotype 4 (strain ATCC BAA-334 / TIGR4).